The primary structure comprises 172 residues: MKEEKKLLLREVEEKITASQGFILLRYLGFTATHSRSFRNNLSGVSAEFEVLKKKIFFKALETSGVEMDPEDSEGHLGVVFAYGDPVSAAKQVLDFNKQHNDSLVFLAGRIDNASLSGREVEAVAKLPSMKELRQQVVGLIAAPMSQVVGIMNSVLSGVVSCVDQKAEKTQE.

Belongs to the universal ribosomal protein uL10 family. Part of the ribosomal stalk of the 50S ribosomal subunit. The N-terminus interacts with L11 and the large rRNA to form the base of the stalk. The C-terminus forms an elongated spine to which L12 dimers bind in a sequential fashion forming a multimeric L10(L12)X complex.

In terms of biological role, forms part of the ribosomal stalk, playing a central role in the interaction of the ribosome with GTP-bound translation factors. The polypeptide is Large ribosomal subunit protein uL10 (Chlamydia trachomatis serovar L2 (strain ATCC VR-902B / DSM 19102 / 434/Bu)).